A 40-amino-acid polypeptide reads, in one-letter code: Neutral phospholipase A2 homolog cannitoxin beta chain 2 (40 aa).

Heterotrimer of alpha, beta, and gamma chains; non-covalently linked. In terms of tissue distribution, expressed by the venom gland.

The protein localises to the secreted. In terms of biological role, heterotrimer: Snake venom phospholipase A2 (PLA2) heterotrimer that acts as a potent presynaptic neurotoxin by blocking synaptic transmission and synaptic vesicle recycling. Enzymatic activity is essential for the neurotoxic effects. May act by binding in a calcium-dependent fashion to neurotonal pentraxin-1 (NPTX1) and neurotonal pentraxin-2 (NPTX2), but not to neuronal pentraxin receptor (NPTXR). Also binds to taipoxin-associated calcium binding protein 49 (RCN2), a protein localized in the lumen of endoplasmic reticulum. Monomer (beta chain): Snake venom phospholipase A2 homolog that is neither toxic nor enzymatically active. Does not bind calcium. This Oxyuranus scutellatus canni (Papuan taipan) protein is Neutral phospholipase A2 homolog cannitoxin beta chain 2.